Reading from the N-terminus, the 954-residue chain is MTTPTEFQFTDYQPYDFANRRHIGPSPAEMDEMLKTVGYDSLDGLIAATVPASIRQSAPLVWGKAMSEREALDKLRETANKNKALTSLIGQGYYGTITPPVIQRNILENPAWYTAYTPYQPEISQGRLEALLNFQTMICDLTGLDVANASLLDEATAAAEAMAMAERVAKSKAKAFFVDSNCHPQTIAVIQTRAEPLGWGVVVGNPFTDLNPGEVFGALFQYPGTHGHVSDFTPLINALHNAQAIAAVAADPLALLLLKSPGEMGADIAIGSSQRFGVPVGYGGPHAAYMAVKDAIKRSMPGRLVGVSVDSRGNRAYRLSLQTREQHIRREKATSNICTAQVLLAVMASMYAVFHGPQGLKAIAQQVHQKTVLLAKGLEKLGFTIEPETFFDTITLEVGHMQGLILRAAVAEGVNLRKVGTTKIGISLDERTRPATLEAVWRAFGGNFAVGDFTPDYRLPTSLLRTSQYLTHPIFHMNRAESEMTRYIRRLSDRDLALDRAMIPLGSCTMKLNATAEMLPITWPEFSDIHPFAPADQALGYQEMIDDLSEKLCAVTGYDAISMQPNSGAQGEYAGLLTIRNYHLAKGDTHRTVCLIPTSAHGTNPASAQMAGMLVVPVKALDNGDVDLADFRTKAEQHSTNLSCCMITYPSTHGVFEETVREICEITHAHGGQVYLDGANMNAMVGIARPGDIGSDVSHLNLHKTFCIPHGGGGPGMGPIGVKAHLTPYLPGHVETDGRPGAVSAAPYGSPSILPISWSYCLMMGGEGLTQATKVAILNANYIAARLTGAYDVLYTSASGRVAHECIIDTRPLADSAGVTVDDVAKRLIDCGFHAPTMSWPVAGTLMIEPTESETKAELDRFCTAMLAIREEARAIEDGRMDKTNNPLKNAPHTVEDLVGEWDRPYSRDQACYPPGAFRVDKYWSSVNRVDNVYGDRNLVCTCPPMSEYAEAAE.

Residue Lys-704 is modified to N6-(pyridoxal phosphate)lysine.

The protein belongs to the GcvP family. The glycine cleavage system is composed of four proteins: P, T, L and H. The cofactor is pyridoxal 5'-phosphate.

The enzyme catalyses N(6)-[(R)-lipoyl]-L-lysyl-[glycine-cleavage complex H protein] + glycine + H(+) = N(6)-[(R)-S(8)-aminomethyldihydrolipoyl]-L-lysyl-[glycine-cleavage complex H protein] + CO2. Its function is as follows. The glycine cleavage system catalyzes the degradation of glycine. The P protein binds the alpha-amino group of glycine through its pyridoxal phosphate cofactor; CO(2) is released and the remaining methylamine moiety is then transferred to the lipoamide cofactor of the H protein. The sequence is that of Glycine dehydrogenase (decarboxylating) from Allorhizobium ampelinum (strain ATCC BAA-846 / DSM 112012 / S4) (Agrobacterium vitis (strain S4)).